The primary structure comprises 145 residues: Protein ImpA (145 aa).

Residues S64 and K101 each act as for autocatalytic cleavage activity in the active site.

It belongs to the peptidase S24 family.

In terms of biological role, involved in UV protection and mutation. This Escherichia coli protein is Protein ImpA.